The primary structure comprises 245 residues: Orotidine 5'-phosphate decarboxylase (245 aa).

Residues aspartate 22, lysine 44, 71 to 80, threonine 131, arginine 192, glutamine 201, glycine 221, and arginine 222 each bind substrate; that span reads DLKFHDIPNT. The active-site Proton donor is lysine 73.

It belongs to the OMP decarboxylase family. Type 1 subfamily. In terms of assembly, homodimer.

The enzyme catalyses orotidine 5'-phosphate + H(+) = UMP + CO2. The protein operates within pyrimidine metabolism; UMP biosynthesis via de novo pathway; UMP from orotate: step 2/2. In terms of biological role, catalyzes the decarboxylation of orotidine 5'-monophosphate (OMP) to uridine 5'-monophosphate (UMP). This Salmonella choleraesuis (strain SC-B67) protein is Orotidine 5'-phosphate decarboxylase.